Reading from the N-terminus, the 130-residue chain is Succinate dehydrogenase assembly factor 3, mitochondrial (130 aa).

The N-terminal 8 residues, 1-8 (MRPSLLRL), are a transit peptide targeting the mitochondrion.

This sequence belongs to the complex I LYR family. SDHAF3 subfamily. Interacts with the iron-sulfur protein subunit within the SDH catalytic dimer.

It localises to the mitochondrion matrix. Plays an essential role in the assembly of succinate dehydrogenase (SDH), an enzyme complex (also referred to as respiratory complex II) that is a component of both the tricarboxylic acid (TCA) cycle and the mitochondrial electron transport chain, and which couples the oxidation of succinate to fumarate with the reduction of ubiquinone (coenzyme Q) to ubiquinol. Promotes maturation of the iron-sulfur protein subunit of the SDH catalytic dimer, protecting it from the deleterious effects of oxidants. May act together with SDHAF1. The polypeptide is Succinate dehydrogenase assembly factor 3, mitochondrial (Gibberella zeae (strain ATCC MYA-4620 / CBS 123657 / FGSC 9075 / NRRL 31084 / PH-1) (Wheat head blight fungus)).